The primary structure comprises 115 residues: Ribosome-binding factor A (115 aa).

Belongs to the RbfA family. As to quaternary structure, monomer. Binds 30S ribosomal subunits, but not 50S ribosomal subunits or 70S ribosomes.

The protein localises to the cytoplasm. Its function is as follows. One of several proteins that assist in the late maturation steps of the functional core of the 30S ribosomal subunit. Associates with free 30S ribosomal subunits (but not with 30S subunits that are part of 70S ribosomes or polysomes). Required for efficient processing of 16S rRNA. May interact with the 5'-terminal helix region of 16S rRNA. The polypeptide is Ribosome-binding factor A (Staphylococcus carnosus (strain TM300)).